Consider the following 441-residue polypeptide: Nucleoprotein (441 aa).

The residue at position 5 (serine 5) is a Phosphoserine; by host. A CoV N NTD domain is found at 14 to 136 (VPLSLYAPLR…QLPSVVEIVE (123 aa)). Positions 16–146 (LSLYAPLRVT…PNTPPASRAN (131 aa)) are RNA-binding. Disordered regions lie at residues 131-219 (VVEI…VTSR) and 231-278 (KSLG…LKDI). Serine 143 carries the phosphoserine; by host modification. Low complexity predominate over residues 143–215 (SRANSRSRSR…NRNQSNDRGG (73 aa)). Basic and acidic residues-rich tracts occupy residues 238 to 255 (NPDR…KSDN) and 269 to 278 (TSKERDLKDI). The CoV N CTD domain maps to 266 to 382 (SRATSKERDL…AFKTGNAKLQ (117 aa)). The interval 277-379 (DIPEWRRIPK…QVDAFKTGNA (103 aa)) is dimerization.

This sequence belongs to the alphacoronavirus nucleocapsid protein family. Homooligomer. Both monomeric and oligomeric forms interact with RNA. Interacts with protein M. Interacts with NSP3; this interaction serves to tether the genome to the newly translated replicase-transcriptase complex at a very early stage of infection. Interacts with host RSAD2; this interaction inhibits viral replication. Post-translationally, ADP-ribosylated. The ADP-ribosylation is retained in the virion during infection. Phosphorylated on serine and threonine residues.

It localises to the virion. It is found in the host endoplasmic reticulum-Golgi intermediate compartment. The protein localises to the host Golgi apparatus. Functionally, packages the positive strand viral genome RNA into a helical ribonucleocapsid (RNP) and plays a fundamental role during virion assembly through its interactions with the viral genome and membrane protein M. Plays an important role in enhancing the efficiency of subgenomic viral RNA transcription as well as viral replication. This chain is Nucleoprotein, found in Porcine epidemic diarrhea virus (strain CV777) (PEDV).